Consider the following 390-residue polypeptide: Succinyl-diaminopimelate desuccinylase 1 (390 aa).

His76 contacts Zn(2+). Residue Asp78 is part of the active site. Residue Asp109 participates in Zn(2+) binding. Catalysis depends on Glu143, which acts as the Proton acceptor. Zn(2+)-binding residues include Glu144, Glu172, and His363.

It belongs to the peptidase M20A family. DapE subfamily. In terms of assembly, homodimer. Zn(2+) is required as a cofactor. Requires Co(2+) as cofactor.

The catalysed reaction is N-succinyl-(2S,6S)-2,6-diaminopimelate + H2O = (2S,6S)-2,6-diaminopimelate + succinate. Its pathway is amino-acid biosynthesis; L-lysine biosynthesis via DAP pathway; LL-2,6-diaminopimelate from (S)-tetrahydrodipicolinate (succinylase route): step 3/3. Catalyzes the hydrolysis of N-succinyl-L,L-diaminopimelic acid (SDAP), forming succinate and LL-2,6-diaminopimelate (DAP), an intermediate involved in the bacterial biosynthesis of lysine and meso-diaminopimelic acid, an essential component of bacterial cell walls. This Alteromonas mediterranea (strain DSM 17117 / CIP 110805 / LMG 28347 / Deep ecotype) protein is Succinyl-diaminopimelate desuccinylase 1.